The sequence spans 341 residues: Phosphoribosylformylglycinamidine cyclo-ligase (341 aa).

The protein belongs to the AIR synthase family.

The protein localises to the cytoplasm. It carries out the reaction 2-formamido-N(1)-(5-O-phospho-beta-D-ribosyl)acetamidine + ATP = 5-amino-1-(5-phospho-beta-D-ribosyl)imidazole + ADP + phosphate + H(+). The protein operates within purine metabolism; IMP biosynthesis via de novo pathway; 5-amino-1-(5-phospho-D-ribosyl)imidazole from N(2)-formyl-N(1)-(5-phospho-D-ribosyl)glycinamide: step 2/2. The sequence is that of Phosphoribosylformylglycinamidine cyclo-ligase from Xanthomonas oryzae pv. oryzae (strain MAFF 311018).